The primary structure comprises 251 residues: Hydroxyacylglutathione hydrolase (251 aa).

Positions 53, 55, 57, 58, 110, 127, and 165 each coordinate Zn(2+).

It belongs to the metallo-beta-lactamase superfamily. Glyoxalase II family. In terms of assembly, monomer. Requires Zn(2+) as cofactor.

It carries out the reaction an S-(2-hydroxyacyl)glutathione + H2O = a 2-hydroxy carboxylate + glutathione + H(+). Its pathway is secondary metabolite metabolism; methylglyoxal degradation; (R)-lactate from methylglyoxal: step 2/2. Functionally, thiolesterase that catalyzes the hydrolysis of S-D-lactoyl-glutathione to form glutathione and D-lactic acid. This chain is Hydroxyacylglutathione hydrolase, found in Pectobacterium atrosepticum (strain SCRI 1043 / ATCC BAA-672) (Erwinia carotovora subsp. atroseptica).